Here is a 436-residue protein sequence, read N- to C-terminus: 3-hydroxy-3-methylglutaryl-coenzyme A reductase (436 aa).

Active-site charge relay system residues include E99, K277, and D293. Residue H390 is the Proton donor of the active site.

This sequence belongs to the HMG-CoA reductase family.

The catalysed reaction is (R)-mevalonate + 2 NADP(+) + CoA = (3S)-3-hydroxy-3-methylglutaryl-CoA + 2 NADPH + 2 H(+). It participates in metabolic intermediate biosynthesis; (R)-mevalonate biosynthesis; (R)-mevalonate from acetyl-CoA: step 3/3. Its function is as follows. Converts HMG-CoA to mevalonate. This chain is 3-hydroxy-3-methylglutaryl-coenzyme A reductase (hmgA), found in Archaeoglobus fulgidus (strain ATCC 49558 / DSM 4304 / JCM 9628 / NBRC 100126 / VC-16).